We begin with the raw amino-acid sequence, 155 residues long: Microsomal glutathione S-transferase 1 (155 aa).

Residues 3-9 are Lumenal-facing; sequence DLKQLMD. Residues 10-33 traverse the membrane as a helical segment; the sequence is NEVLMAFTSYATIILAKMMFLSSA. At 34-62 the chain is on the cytoplasmic side; sequence TAFQRLTNKVFANPEDCAGFGKGENAKKF. Arg38 is a binding site for glutathione. Lys42, Lys55, and Lys60 each carry N6-acetyllysine. The chain crosses the membrane as a helical span at residues 63–96; the sequence is LRTDEKVERVRRAHLNDLENIVPFLGIGLLYSLS. Arg73, Arg74, His76, and Glu81 together coordinate glutathione. Tyr93 is modified (3'-nitrotyrosine; in vitro). Over 97–99 the chain is Lumenal; the sequence is GPD. Residues 100–123 traverse the membrane as a helical segment; the sequence is LSTALIHFRIFVGARIYHTIAYLT. Tyr121 is a glutathione binding site. At 124–128 the chain is on the cytoplasmic side; it reads PLPQP. The chain crosses the membrane as a helical span at residues 129 to 148; it reads NRGLAFFVGYGVTLSMAYRL. At 149 to 155 the chain is on the lumenal side; it reads LRSRLYL.

The protein belongs to the MAPEG family. As to quaternary structure, homotrimer; The trimer binds only one molecule of glutathione. In vitro, peroxynitrite induces nitration at Tyr-93 which activates the enzyme. As to expression, highest in the liver, followed by kidney and testis and much lower in seminal vesicles, spleen, lung and brain.

It localises to the endoplasmic reticulum membrane. It is found in the mitochondrion outer membrane. It catalyses the reaction RX + glutathione = an S-substituted glutathione + a halide anion + H(+). In vitro, can be activated by reagents that attack Cys-50 sulfhydryl, such as N-ethylmaleimide and via nitration of Tyr-93 by peroxynitrite. Its function is as follows. Conjugation of reduced glutathione to a wide number of exogenous and endogenous hydrophobic electrophiles. The chain is Microsomal glutathione S-transferase 1 (Mgst1) from Rattus norvegicus (Rat).